We begin with the raw amino-acid sequence, 339 residues long: Probable long-chain-alcohol O-fatty-acyltransferase 7 (339 aa).

The next 7 membrane-spanning stretches (helical) occupy residues 7–27 (SLIN…CLPP), 39–59 (IFPV…SIFT), 113–133 (HLST…LYVH), 143–163 (FLLC…LTLL), 226–246 (MLIG…VVFF), 254–274 (TGEV…EVAA), and 287–307 (PVVS…WLFF).

The protein belongs to the wax synthase family.

The protein resides in the membrane. It catalyses the reaction a long chain fatty alcohol + a fatty acyl-CoA = a wax ester + CoA. Its function is as follows. Catalyzes the final step in the synthesis of long-chain linear esters (waxes). This chain is Probable long-chain-alcohol O-fatty-acyltransferase 7 (AT7), found in Arabidopsis thaliana (Mouse-ear cress).